The primary structure comprises 140 residues: ATP synthase epsilon chain (140 aa).

The protein belongs to the ATPase epsilon chain family. As to quaternary structure, F-type ATPases have 2 components, CF(1) - the catalytic core - and CF(0) - the membrane proton channel. CF(1) has five subunits: alpha(3), beta(3), gamma(1), delta(1), epsilon(1). CF(0) has three main subunits: a, b and c.

Its subcellular location is the cell inner membrane. Its function is as follows. Produces ATP from ADP in the presence of a proton gradient across the membrane. This Neisseria meningitidis serogroup A / serotype 4A (strain DSM 15465 / Z2491) protein is ATP synthase epsilon chain.